A 160-amino-acid polypeptide reads, in one-letter code: MRIWIDADACPKVAKELVCKFALKRKLEVWMVAGQPQVKPPFACVHLVVVESGMDAADDYLVEQAEPGDLAICSDVPLADRLIKKQVAALDPRGREFDARNMGDKLAMRNLMADLRDQGQMGGGQAPYGERDRQAFANALDRLLTRLQREADLRASQPHR.

It belongs to the UPF0178 family.

The protein is UPF0178 protein PLES_56411 of Pseudomonas aeruginosa (strain LESB58).